A 525-amino-acid polypeptide reads, in one-letter code: Protein translocase subunit SecD (525 aa).

Transmembrane regions (helical) follow at residues 9-29 (LYLV…SLLG), 368-388 (VLIG…GFGM), 392-412 (LAVV…QATL), 415-435 (PGIA…VLIF), 460-480 (FSTI…LYQF), and 487-507 (GFAV…IFVT).

The protein belongs to the SecD/SecF family. SecD subfamily. Forms a complex with SecF. Part of the essential Sec protein translocation apparatus which comprises SecA, SecYEG and auxiliary proteins SecDF-YajC and YidC.

It localises to the cell inner membrane. Functionally, part of the Sec protein translocase complex. Interacts with the SecYEG preprotein conducting channel. SecDF uses the proton motive force (PMF) to complete protein translocation after the ATP-dependent function of SecA. This is Protein translocase subunit SecD from Magnetococcus marinus (strain ATCC BAA-1437 / JCM 17883 / MC-1).